The sequence spans 60 residues: Large ribosomal subunit protein bL32 (60 aa).

Residues 1–21 (MAVPARHTSKAKKNKRRTHYK) form a disordered region. Residues 7-20 (HTSKAKKNKRRTHY) are compositionally biased toward basic residues.

Belongs to the bacterial ribosomal protein bL32 family.

This chain is Large ribosomal subunit protein bL32, found in Streptococcus equi subsp. zooepidemicus (strain H70).